Here is a 375-residue protein sequence, read N- to C-terminus: Hemolysin BL-binding component (375 aa).

The signal sequence occupies residues 1–31 (MIKKIPYKLLAVSTLLTITTANVVSPVATFA). Residues 232–252 (FNVMKGAILGLPIIGGIIVGV) traverse the membrane as a helical segment.

Composed of a binding component, B, and two lytic components, L1 and L2. All three subunits act synergically to cause hemolysis.

The protein resides in the secreted. Its subcellular location is the host cell membrane. Cytotoxic protein, part of the enterotoxin complex. Responsible for binding to erythrocytes. This enterotoxin is thought to be the cause of the diarrheal form of gastroenteritis caused by food-borne strains of B.cereus. The sequence is that of Hemolysin BL-binding component (hblA) from Bacillus cereus.